Reading from the N-terminus, the 475-residue chain is Proton-coupled amino acid transporter 1 (475 aa).

The span at 1–15 (MSTQRLRNEDYHDYS) shows a compositional bias: basic and acidic residues. The segment at 1-32 (MSTQRLRNEDYHDYSSTDVSPEESPSEGLGSF) is disordered. The Cytoplasmic portion of the chain corresponds to 1–50 (MSTQRLRNEDYHDYSSTDVSPEESPSEGLGSFSPGSYQRLGENSSMTWFQ). Residues 51 to 71 (TLIHLLKGNIGTGLLGLPLAV) form a helical membrane-spanning segment. Residues 72-77 (KNAGLL) lie on the Extracellular side of the membrane. Residues 78 to 98 (LGPLSLLVIGIVAVHCMGILV) form a helical membrane-spanning segment. Over 99-140 (KCAHHLCRRLNKPFLDYGDTVMYGLECSPSTWIRNHSHWGRR) the chain is Cytoplasmic. The helical transmembrane segment at 141–161 (IVDFFLVVTQLGFCCVYFVFL) threads the bilayer. Residues 162–189 (ADNFKQVIEAANGTTTNCNNNETVILTP) are Extracellular-facing. Residues asparagine 173 and asparagine 182 are each glycosylated (N-linked (GlcNAc...) asparagine). Residues cysteine 179 and cysteine 328 are joined by a disulfide bond. The chain crosses the membrane as a helical span at residues 190–210 (TMDSRLYMLTFLPFLVLLSFI). The Cytoplasmic segment spans residues 211-214 (RNLR). The helical transmembrane segment at 215-235 (ILSIFSLLANISMFVSLIMIY) threads the bilayer. At 236 to 256 (QFIVQRIPDPSHLPLVAPWKT) the chain is on the extracellular side. The helical transmembrane segment at 257-277 (YPLFFGTAIFAFEGIGVVLPL) threads the bilayer. Residues 278 to 288 (ENKMKDSQKFP) lie on the Cytoplasmic side of the membrane. A helical transmembrane segment spans residues 289-309 (LILYLGMAIITVLYISLGSLG). The Extracellular portion of the chain corresponds to 310 to 341 (YLQFGADIKGSITLNLPNCWLYQSVKLLYSIG). The chain crosses the membrane as a helical span at residues 342–362 (IFFTYALQFYVAAEIIIPAIV). Residues 363–371 (SRVPERFEL) lie on the Cytoplasmic side of the membrane. The chain crosses the membrane as a helical span at residues 372–392 (VVDLSARTAMVCVTCVLAVLI). The Extracellular segment spans residues 393-396 (PRLD). The chain crosses the membrane as a helical span at residues 397 to 417 (LVISLVGSVSSSALALIIPPL). Topologically, residues 418–438 (LEVTTYYGEGISPLTITKDAL) are cytoplasmic. Residues 439 to 459 (ISILGFVGFVVGTYESLWELI) traverse the membrane as a helical segment. At 460–475 (QPSHSDSSTNSTSAFI) the chain is on the extracellular side. Asparagine 469 is a glycosylation site (N-linked (GlcNAc...) asparagine).

This sequence belongs to the amino acid/polyamine transporter 2 family. As to expression, widely expressed and predominantly expressed in brain. Within the brain, expression restricted to neurons and not detected in glial cells. Abundant in regions rich in neurons using glutamate and GABA such as Purkinje cells in the cerebellum and pyramidal cells in the hippocampus.

Its subcellular location is the cell membrane. It is found in the apical cell membrane. The protein localises to the lysosome membrane. The catalysed reaction is glycine(in) + H(+)(in) = glycine(out) + H(+)(out). It catalyses the reaction L-proline(out) + H(+)(out) = L-proline(in) + H(+)(in). The enzyme catalyses D-proline(out) + H(+)(out) = D-proline(in) + H(+)(in). It carries out the reaction L-alanine(in) + H(+)(in) = L-alanine(out) + H(+)(out). The catalysed reaction is D-alanine(in) + H(+)(in) = D-alanine(out) + H(+)(out). It catalyses the reaction L-serine(in) + H(+)(in) = L-serine(out) + H(+)(out). The enzyme catalyses D-serine(out) + H(+)(out) = D-serine(in) + H(+)(in). It carries out the reaction 4-aminobutanoate(in) + H(+)(in) = 4-aminobutanoate(out) + H(+)(out). The catalysed reaction is beta-alanine(in) + H(+)(in) = beta-alanine(out) + H(+)(out). Functionally, electrogenic proton/amino acid symporter with selectivity for small apolar L-amino acids, their D-enantiomers and selected amino acid derivatives such as 4-aminobutanoate/GABA. May be involved in the efflux from the lysosomal compartment of neutral amino acids resulting from proteolysis. May play a role in specifying sites for exocytosis in neurons. This is Proton-coupled amino acid transporter 1 from Rattus norvegicus (Rat).